The following is a 144-amino-acid chain: Prefoldin subunit alpha (144 aa).

This sequence belongs to the prefoldin alpha subunit family. As to quaternary structure, heterohexamer of two alpha and four beta subunits.

It is found in the cytoplasm. Functionally, molecular chaperone capable of stabilizing a range of proteins. Seems to fulfill an ATP-independent, HSP70-like function in archaeal de novo protein folding. This is Prefoldin subunit alpha from Metallosphaera sedula (strain ATCC 51363 / DSM 5348 / JCM 9185 / NBRC 15509 / TH2).